The sequence spans 678 residues: Vacuolar protein sorting-associated protein 1 (678 aa).

The Dynamin-type G domain maps to Leu-24 to Pro-311. The G1 motif stretch occupies residues Arg-34–Ser-41. Residue Arg-34–Ser-41 participates in GTP binding. Positions Val-60–Arg-62 are G2 motif. A disordered region spans residues Asn-71 to Glu-96. The span at Lys-78–Asp-90 shows a compositional bias: basic and acidic residues. The G3 motif stretch occupies residues Asp-153–Gly-156. GTP is bound by residues Asp-153–Leu-157 and Thr-222–Asp-225. The segment at Thr-222–Asp-225 is G4 motif. The G5 motif stretch occupies residues Ile-252–Gly-255. In terms of domain architecture, GED spans Thr-592 to Val-678.

Belongs to the TRAFAC class dynamin-like GTPase superfamily. Dynamin/Fzo/YdjA family.

The chain is Vacuolar protein sorting-associated protein 1 (vps1) from Schizosaccharomyces pombe (strain 972 / ATCC 24843) (Fission yeast).